The primary structure comprises 117 residues: Regulator of ribonuclease activity B (117 aa).

Belongs to the RraB family. Interacts with the C-terminal region of Rne.

The protein resides in the cytoplasm. Globally modulates RNA abundance by binding to RNase E (Rne) and regulating its endonucleolytic activity. Can modulate Rne action in a substrate-dependent manner by altering the composition of the degradosome. This chain is Regulator of ribonuclease activity B, found in Pseudoalteromonas atlantica (strain T6c / ATCC BAA-1087).